The following is a 465-amino-acid chain: tRNA-2-methylthio-N(6)-dimethylallyladenosine synthase (465 aa).

The MTTase N-terminal domain occupies 5–125; that stretch reads RKLHIKSFGC…LPELLEKARR (121 aa). [4Fe-4S] cluster contacts are provided by cysteine 14, cysteine 50, cysteine 88, cysteine 166, cysteine 170, and cysteine 173. Residues 152 to 382 enclose the Radical SAM core domain; that stretch reads RARGVSAFVT…QLQGLIDSQQ (231 aa). Residues 387–449 enclose the TRAM domain; that stretch reads RASIGTTVDV…RYSLIGELVK (63 aa).

The protein belongs to the methylthiotransferase family. MiaB subfamily. In terms of assembly, monomer. It depends on [4Fe-4S] cluster as a cofactor.

It is found in the cytoplasm. It carries out the reaction N(6)-dimethylallyladenosine(37) in tRNA + (sulfur carrier)-SH + AH2 + 2 S-adenosyl-L-methionine = 2-methylsulfanyl-N(6)-dimethylallyladenosine(37) in tRNA + (sulfur carrier)-H + 5'-deoxyadenosine + L-methionine + A + S-adenosyl-L-homocysteine + 2 H(+). Its function is as follows. Catalyzes the methylthiolation of N6-(dimethylallyl)adenosine (i(6)A), leading to the formation of 2-methylthio-N6-(dimethylallyl)adenosine (ms(2)i(6)A) at position 37 in tRNAs that read codons beginning with uridine. The protein is tRNA-2-methylthio-N(6)-dimethylallyladenosine synthase of Rhodopseudomonas palustris (strain BisA53).